The sequence spans 486 residues: ATP-dependent rRNA helicase RRP3 (486 aa).

Positions M1–H11 are enriched in basic residues. Positions M1–A52 are disordered. Residues V17–E49 are a coiled coil. Over residues E21–S38 the composition is skewed to basic and acidic residues. A compositionally biased stretch (low complexity) spans T41–A52. Positions S66 to S94 match the Q motif motif. One can recognise a Helicase ATP-binding domain in the interval I97 to C269. A110–T117 contacts ATP. A DEAD box motif is present at residues D216–D219. Positions L300–V446 constitute a Helicase C-terminal domain. Residues R459–E486 are disordered. Basic and acidic residues predominate over residues A476–E486.

Belongs to the DEAD box helicase family. DDX47/RRP3 subfamily. As to quaternary structure, interacts with the SSU processome.

It localises to the nucleus. It catalyses the reaction ATP + H2O = ADP + phosphate + H(+). Functionally, ATP-dependent rRNA helicase required for pre-ribosomal RNA processing. Involved in the maturation of the 35S-pre-rRNA and to its cleavage to mature 18S rRNA. The chain is ATP-dependent rRNA helicase RRP3 from Eremothecium gossypii (strain ATCC 10895 / CBS 109.51 / FGSC 9923 / NRRL Y-1056) (Yeast).